Consider the following 377-residue polypeptide: UPF0754 membrane protein lin2327 (377 aa).

Transmembrane regions (helical) follow at residues 1 to 21 and 357 to 377; these read MSVL…GAMT and YLGG…AMWI.

This sequence belongs to the UPF0754 family.

It localises to the cell membrane. The chain is UPF0754 membrane protein lin2327 from Listeria innocua serovar 6a (strain ATCC BAA-680 / CLIP 11262).